A 53-amino-acid polypeptide reads, in one-letter code: Lantibiotic mutacin-2 (53 aa).

A propeptide spanning residues 1 to 26 (MNKLNSNAVVSLNEVSDSELDTILGG) is cleaved from the precursor. Residues 36-41 (TVSYEC) constitute a cross-link (beta-methyllanthionine (Thr-Cys)). Cross-links (lanthionine (Ser-Cys)) lie at residues 38 to 52 (SYEC…VFTC) and 45 to 53 (SWQHVFTCC). 2,3-didehydrobutyrine is present on Thr-51.

Post-translationally, maturation of lantibiotics involves the enzymatic conversion of Thr, and Ser into dehydrated AA and the formation of thioether bonds with cysteine. This is followed by membrane translocation and cleavage of the modified precursor. In terms of processing, it is not established whether the 2,3-didehydrobutyrine is the E- or Z-isomer.

Lanthionine-containing peptide antibiotic (lantibiotic) active on Gram-positive bacteria including M.luteus, S.aureus, Streptococcus, P.micros, P.acidilactici, C.sporogenes, C.diphtheriae, A.viscosus, G.vaginalis, P.acnes, L.monocytogenes and M.smegmatis, and Gram-negative bacteria including C.jejuni, H.pylori and N.gonorrhoeae. Transiently and partially depolarizes the transmembrane electrical potential and pH gradient of susceptible cells, inhibits the uptake of amino acids and depletes the intracellular ATP pool. This chain is Lantibiotic mutacin-2, found in Streptococcus mutans.